A 240-amino-acid chain; its full sequence is tRNA (guanine-N(7)-)-methyltransferase (240 aa).

S-adenosyl-L-methionine contacts are provided by glutamate 70, glutamate 95, aspartate 122, and aspartate 145. Residue aspartate 145 is part of the active site. Residues lysine 149, aspartate 181, and 218-221 contribute to the substrate site; that span reads TKFE.

This sequence belongs to the class I-like SAM-binding methyltransferase superfamily. TrmB family.

The catalysed reaction is guanosine(46) in tRNA + S-adenosyl-L-methionine = N(7)-methylguanosine(46) in tRNA + S-adenosyl-L-homocysteine. Its pathway is tRNA modification; N(7)-methylguanine-tRNA biosynthesis. Functionally, catalyzes the formation of N(7)-methylguanine at position 46 (m7G46) in tRNA. In Pseudomonas entomophila (strain L48), this protein is tRNA (guanine-N(7)-)-methyltransferase.